The primary structure comprises 453 residues: Ankyrin repeat and SOCS box protein 16 (453 aa).

7 ANK repeats span residues 56–85, 110–139, 142–171, 175–204, 209–238, 242–279, and 283–312; these read CRDP…AANM, KQTA…ELDA, GGRA…KANV, EGTT…TVNL, SQET…DVGL, QGET…DARA, and KRHT…RAEV. Residues 398-450 form the SOCS box domain; sequence YSSALCMVNQPRQLQHLARLAVRARLGSRCRQGATRLPLPPLLRDYLLLRVEG.

The protein belongs to the ankyrin SOCS box (ASB) family.

It functions in the pathway protein modification; protein ubiquitination. In terms of biological role, may be a substrate-recognition component of a SCF-like ECS (Elongin-Cullin-SOCS-box protein) E3 ubiquitin-protein ligase complex which mediates the ubiquitination and subsequent proteasomal degradation of target proteins. The sequence is that of Ankyrin repeat and SOCS box protein 16 (ASB16) from Homo sapiens (Human).